Consider the following 259-residue polypeptide: uncharacterized protein (259 aa).

A signal peptide (or 26) is located at residues 1–19; sequence MKLSVKIAGVLTVAAAAMT. 214–221 contacts ATP; the sequence is GPYELGKT.

This is an uncharacterized protein from Bacillus subtilis (strain 168).